The chain runs to 241 residues: uncharacterized protein (241 aa).

The Cupin type-2 domain occupies 22 to 78; the sequence is SHKHAYSQFLFPLEGSIDLETEGRQVKLNPDHFLYIPPQCEHRFRSIGRNECLVLDV. An HTH araC/xylS-type domain is found at 137–235; that stretch reads YASIAYIHSH…GMPPRLYRNT (99 aa). DNA-binding regions (H-T-H motif) lie at residues 154–175 and 202–225; these read KKLAEIEHYHPAYYSSWFKKQT and LTVVSEALGFQNLSSFTRWFTKST.

This is an uncharacterized protein from Bacillus subtilis (strain 168).